The sequence spans 333 residues: Calcium uniporter protein, mitochondrial (333 aa).

Residues 1–22 constitute a mitochondrion transit peptide; the sequence is MRNGRCLVTPFVTAQRLANLRN. Topologically, residues 23–214 are mitochondrial matrix; the sequence is TLWNRQQIAF…QECEAHTDRV (192 aa). A coiled-coil region spans residues 180–193; the sequence is KKLLLQLENAETLL. The outer juxtamembrane helix (OJMH) stretch occupies residues 195–213; that stretch reads PLHDAKRKIEQECEAHTDR. Residues 215-234 form a helical membrane-spanning segment; it reads MWAGFAAMGVQTGLFARLTW. Topologically, residues 235–243 are mitochondrial intermembrane; that stretch reads WEYSWDIME. The Selectivity filter motif lies at 239-247; that stretch reads WDIMEPVTY. Position 243 (E243) interacts with Ca(2+). The chain crosses the membrane as a helical span at residues 244-260; the sequence is PVTYFATYSTVCATFGY. At 261-333 the chain is on the mitochondrial matrix side; sequence YLYTQQSFEY…SYLSNLEAEK (73 aa). The segment at 262 to 271 is inner juxtamembrane helix (IJMH); the sequence is LYTQQSFEYP. Residues 289-316 are a coiled coil; sequence QNFDIEKYNRLVTEVDELRNQLKRMRDP.

The protein belongs to the MCU (TC 1.A.77) family.

Its subcellular location is the mitochondrion inner membrane. It catalyses the reaction Ca(2+)(in) = Ca(2+)(out). Its activity is regulated as follows. Inhibited by ruthenium red or its derivative Ru360; possibly by obstructing the pore. Mitochondrial inner membrane calcium uniporter that mediates calcium uptake into mitochondria. Constitutes a pore-forming and calcium-conducting subunit. Mitochondrial calcium homeostasis plays key roles in cellular physiology and regulates cell bioenergetics, cytoplasmic calcium signals and activation of cell death pathways. Required for rapid mitochondrial calcium uptake and mitochondrial reactive oxygen species (mtROS) production after wounding. In addition, together with mitochondrial calcium regulator micu-1, required for mitochondrial calcium uptake following axon injury in PLM touch receptor neurons. This is Calcium uniporter protein, mitochondrial from Caenorhabditis elegans.